The sequence spans 391 residues: Methionine import ATP-binding protein MetN 2 (391 aa).

The 237-residue stretch at 44-280 (VHVGKVFATP…PRHGATRALL (237 aa)) folds into the ABC transporter domain. Residue 77–84 (GRSGAGKS) participates in ATP binding.

It belongs to the ABC transporter superfamily. Methionine importer (TC 3.A.1.24) family. As to quaternary structure, the complex is composed of two ATP-binding proteins (MetN), two transmembrane proteins (MetI) and a solute-binding protein (MetQ).

The protein localises to the cell inner membrane. It carries out the reaction L-methionine(out) + ATP + H2O = L-methionine(in) + ADP + phosphate + H(+). It catalyses the reaction D-methionine(out) + ATP + H2O = D-methionine(in) + ADP + phosphate + H(+). Functionally, part of the ABC transporter complex MetNIQ involved in methionine import. Responsible for energy coupling to the transport system. The sequence is that of Methionine import ATP-binding protein MetN 2 from Burkholderia ambifaria (strain ATCC BAA-244 / DSM 16087 / CCUG 44356 / LMG 19182 / AMMD) (Burkholderia cepacia (strain AMMD)).